We begin with the raw amino-acid sequence, 455 residues long: Epoxide hydrolase 1 (455 aa).

The helical; Signal-anchor for type III membrane protein transmembrane segment at 1–21 (MWLELILASVLGFVIYWFVSR) threads the bilayer. The Cytoplasmic segment spans residues 22–455 (DKEETLPLED…RKFVSLAELQ (434 aa)). The active-site Nucleophile is aspartate 226. Residue arginine 295 is modified to Dimethylated arginine. Tyrosine 374 (proton donor) is an active-site residue. The active-site Proton acceptor is histidine 431. Position 439 is an N6-acetyllysine (lysine 439).

This sequence belongs to the peptidase S33 family.

Its subcellular location is the microsome membrane. It localises to the endoplasmic reticulum membrane. It carries out the reaction cis-stilbene oxide + H2O = (1R,2R)-hydrobenzoin. It catalyses the reaction 1-(4-methoxyphenyl)-N-methyl-N-[(3-methyloxetan-3-yl)methyl]methanamine + H2O = 2-{[(4-methoxybenzyl)(methyl)amino]methyl}-2-methylpropane-1,3-diol. The catalysed reaction is 8,9-epoxy-(5Z,11Z,14Z)-eicosatrienoate + H2O = 8,9-dihydroxy-(5Z,11Z,14Z)-eicosatrienoate. The enzyme catalyses 11,12-epoxy-(5Z,8Z,14Z)-eicosatrienoate + H2O = 11,12-dihydroxy-(5Z,8Z,14Z)-eicosatrienoate. It carries out the reaction 2-(5Z,8Z,11Z,14Z-eicosatetraenoyl)-glycerol + H2O = glycerol + (5Z,8Z,11Z,14Z)-eicosatetraenoate + H(+). Inhibited by 10-hydroxystearamide and methoxy-arachidonyl fluorophosphate. Functionally, biotransformation enzyme that catalyzes the hydrolysis of arene and aliphatic epoxides to less reactive and more water soluble dihydrodiols by the trans addition of water. May play a role in the metabolism of endogenous lipids such as epoxide-containing fatty acids. Metabolizes the abundant endocannabinoid 2-arachidonoylglycerol (2-AG) to free arachidonic acid (AA) and glycerol. Binds 20(S)-hydroxycholesterol (20(S)-OHC). The protein is Epoxide hydrolase 1 of Mus musculus (Mouse).